A 303-amino-acid polypeptide reads, in one-letter code: Glutathione transport system permease protein GsiD (303 aa).

Helical transmembrane passes span 40 to 60 (AMTA…ARWI), 105 to 125 (LAAG…LGLL), 144 to 164 (LFAF…GSGI), 165 to 185 (ANVI…LVRG), 222 to 242 (IVVF…SLSF), and 266 to 286 (VIAP…VLAF). Residues 101–290 (AQISLAAGVF…LTVLAFNLLG (190 aa)) form the ABC transmembrane type-1 domain.

This sequence belongs to the binding-protein-dependent transport system permease family. As to quaternary structure, the complex is composed of two ATP-binding proteins (GsiA), two transmembrane proteins (GsiC and GsiD) and a solute-binding protein (GsiB).

It is found in the cell inner membrane. In terms of biological role, part of the ABC transporter complex GsiABCD involved in glutathione import. Probably responsible for the translocation of the substrate across the membrane. The chain is Glutathione transport system permease protein GsiD from Escherichia coli O6:K15:H31 (strain 536 / UPEC).